The sequence spans 146 residues: uncharacterized protein (146 aa).

The N-terminal stretch at 1-26 (MQFRPSIALVLSIVGILSLEISWTDG) is a signal peptide.

Prismatic layer of shell (at protein level). Expressed primarily in the mantle with highest level in the mantle edge and lower level in the mantle pallium.

It is found in the secreted. This is an uncharacterized protein from Margaritifera margaritifera (Freshwater pearl mussel).